We begin with the raw amino-acid sequence, 434 residues long: N-acylneuraminate cytidylyltransferase (434 aa).

M1 bears the N-acetylmethionine mark. The interval 1-42 (MDSVEKGAATSVSNPRGRPSRGRPPKLQRNSRGGQGRGVEKP) is disordered. The BC1 motif motif lies at 15–31 (PRGRPSRGRPPKLQRNS). R37 and R52 each carry omega-N-methylarginine. Residues R52, N62, R111, S120, S122, and Q143 each contribute to the substrate site. The BC2 motif signature appears at 200-206 (KRPRRQD). Residue R201 is part of the active site. The short motif at 269–276 (KEKLKEIK) is the BC3 motif element.

It belongs to the CMP-NeuNAc synthase family. Homotetramer; the active enzyme is formed by a dimer of dimers.

The protein resides in the nucleus. It carries out the reaction an N-acylneuraminate + CTP = a CMP-N-acyl-beta-neuraminate + diphosphate. Its pathway is amino-sugar metabolism; N-acetylneuraminate metabolism. In terms of biological role, catalyzes the activation of N-acetylneuraminic acid (NeuNAc) to cytidine 5'-monophosphate N-acetylneuraminic acid (CMP-NeuNAc), a substrate required for the addition of sialic acid. Has some activity toward NeuNAc, N-glycolylneuraminic acid (Neu5Gc) or 2-keto-3-deoxy-D-glycero-D-galacto-nononic acid (KDN). The polypeptide is N-acylneuraminate cytidylyltransferase (CMAS) (Bos taurus (Bovine)).